Here is a 374-residue protein sequence, read N- to C-terminus: Bifunctional enzyme IspD/IspF (374 aa).

A 2-C-methyl-D-erythritol 4-phosphate cytidylyltransferase region spans residues 1-213 (MLDVTLIVLC…PCLKAPSNNF (213 aa)). The 2-C-methyl-D-erythritol 2,4-cyclodiphosphate synthase stretch occupies residues 214-374 (FTGTGFDIHA…TLKYYNWKKR (161 aa)). Residues Asp-220 and His-222 each coordinate a divalent metal cation. 4-CDP-2-C-methyl-D-erythritol 2-phosphate is bound by residues 220–222 (DIH) and 246–247 (HS). His-254 contacts a divalent metal cation. Residues 268–270 (DIG), 273–277 (FPDTD), 344–347 (TTAE), Phe-351, and Arg-354 contribute to the 4-CDP-2-C-methyl-D-erythritol 2-phosphate site.

This sequence in the N-terminal section; belongs to the IspD/TarI cytidylyltransferase family. IspD subfamily. In the C-terminal section; belongs to the IspF family. A divalent metal cation is required as a cofactor.

The catalysed reaction is 2-C-methyl-D-erythritol 4-phosphate + CTP + H(+) = 4-CDP-2-C-methyl-D-erythritol + diphosphate. It catalyses the reaction 4-CDP-2-C-methyl-D-erythritol 2-phosphate = 2-C-methyl-D-erythritol 2,4-cyclic diphosphate + CMP. It functions in the pathway isoprenoid biosynthesis; isopentenyl diphosphate biosynthesis via DXP pathway; isopentenyl diphosphate from 1-deoxy-D-xylulose 5-phosphate: step 2/6. The protein operates within isoprenoid biosynthesis; isopentenyl diphosphate biosynthesis via DXP pathway; isopentenyl diphosphate from 1-deoxy-D-xylulose 5-phosphate: step 4/6. Functionally, bifunctional enzyme that catalyzes the formation of 4-diphosphocytidyl-2-C-methyl-D-erythritol from CTP and 2-C-methyl-D-erythritol 4-phosphate (MEP) (IspD), and catalyzes the conversion of 4-diphosphocytidyl-2-C-methyl-D-erythritol 2-phosphate (CDP-ME2P) to 2-C-methyl-D-erythritol 2,4-cyclodiphosphate (ME-CPP) with a corresponding release of cytidine 5-monophosphate (CMP) (IspF). This Aliarcobacter butzleri (strain RM4018) (Arcobacter butzleri) protein is Bifunctional enzyme IspD/IspF.